The sequence spans 457 residues: ATP synthase subunit beta (457 aa).

An ATP-binding site is contributed by 147–154 (GGAGVGKT).

This sequence belongs to the ATPase alpha/beta chains family. As to quaternary structure, F-type ATPases have 2 components, CF(1) - the catalytic core - and CF(0) - the membrane proton channel. CF(1) has five subunits: alpha(3), beta(3), gamma(1), delta(1), epsilon(1). CF(0) has three main subunits: a(1), b(2) and c(9-12). The alpha and beta chains form an alternating ring which encloses part of the gamma chain. CF(1) is attached to CF(0) by a central stalk formed by the gamma and epsilon chains, while a peripheral stalk is formed by the delta and b chains.

The protein resides in the cell inner membrane. The enzyme catalyses ATP + H2O + 4 H(+)(in) = ADP + phosphate + 5 H(+)(out). Its function is as follows. Produces ATP from ADP in the presence of a proton gradient across the membrane. The catalytic sites are hosted primarily by the beta subunits. The protein is ATP synthase subunit beta of Glaesserella parasuis serovar 5 (strain SH0165) (Haemophilus parasuis).